Here is a 156-residue protein sequence, read N- to C-terminus: Small ribosomal subunit protein uS7 (156 aa).

It belongs to the universal ribosomal protein uS7 family. In terms of assembly, part of the 30S ribosomal subunit. Contacts proteins S9 and S11.

Its function is as follows. One of the primary rRNA binding proteins, it binds directly to 16S rRNA where it nucleates assembly of the head domain of the 30S subunit. Is located at the subunit interface close to the decoding center, probably blocks exit of the E-site tRNA. The polypeptide is Small ribosomal subunit protein uS7 (Brucella anthropi (strain ATCC 49188 / DSM 6882 / CCUG 24695 / JCM 21032 / LMG 3331 / NBRC 15819 / NCTC 12168 / Alc 37) (Ochrobactrum anthropi)).